Here is a 619-residue protein sequence, read N- to C-terminus: Adagio protein 3 (619 aa).

The PAS domain maps to 44 to 123; sequence VGMFYYPMTP…SEIRRCLEEG (80 aa). Cys-91 carries the post-translational modification S-4a-FMN cysteine. Positions 127–168 constitute a PAC domain; that stretch reads QGELLNFRKDGTPLVNRLRLAPIRDDDGTITHVIGIQVFSET. The 47-residue stretch at 211–257 folds into the F-box domain; it reads ILQLSDEVLAHNILSRLTPRDVASIGSACRRLRQLTKNESVRKMVCQ. Kelch repeat units lie at residues 304-354, 357-404, 409-457, 462-513, and 523-571; these read SRCN…TSSP, RWGH…AGGT, RSWH…PTSW, RLGH…ECSA, and RLDH…NVPG.

The protein belongs to the ADAGIO family. As to quaternary structure, interacts with ADO1 (via Kelch repeats), ADO2 (via Kelch repeats), SKP1A/ASK1, SKP1B/ASK2, ASK3, SKP1K/ASK11, ASK12, ASK13 and SKP1N/ASK14. Interacts (via Kelch repeats) with CDF1, CDF2 and CDF3. Interacts (via N-terminus) with CO and GI (via N-terminus) in a blue-light-dependent manner. Post-translationally, FMN binds covalently to cysteine after exposure to blue light and is reversed in the dark. In terms of tissue distribution, highly expressed in stomata and leaves and to a lower extent in seeds, roots, rosettes, stems and siliques. Also present in sepals and anther filaments.

The protein resides in the nucleus. It is found in the cytoplasm. It participates in protein modification; protein ubiquitination. Its function is as follows. Component of an E3 ubiquitin ligase complex that plays a central role in blue light-dependent circadian cycles. Acts as a blue light photoreceptor, due to the presence of FMN, that mediates light-regulated protein degradation of critical clock components by targeting them to the proteasome complex. The SCF(ADO3) E3 ubiquitin ligase complex is involved in the regulation of circadian clock-dependent processes including transition to flowering time, hypocotyl elongation, cotyledons and leaf movement rhythms. Forms a complex with 'GIGANTEA' (GI) to regulate 'CONSTANS' (CO) expression. Promotes CO expression during the light period of long days by decreasing the stability of CDF1 and CDF2 and by interacting directly with the CO protein and stabilizing it. ADO3 function is mainly GI dependent. Does not act as a regulator of CDF1 transcription. The interactions of ADO1/ZTL and ADO2 with ADO3 prevent its interaction with CDF1. This chain is Adagio protein 3 (ADO3), found in Arabidopsis thaliana (Mouse-ear cress).